The sequence spans 239 residues: Large ribosomal subunit protein uL1 (239 aa).

It belongs to the universal ribosomal protein uL1 family. As to quaternary structure, part of the 50S ribosomal subunit.

In terms of biological role, binds directly to 23S rRNA. The L1 stalk is quite mobile in the ribosome, and is involved in E site tRNA release. Protein L1 is also a translational repressor protein, it controls the translation of the L11 operon by binding to its mRNA. The sequence is that of Large ribosomal subunit protein uL1 from Rickettsia conorii (strain ATCC VR-613 / Malish 7).